The primary structure comprises 397 residues: Pyridinium-3,5-bisthiocarboxylic acid mononucleotide nickel insertion protein (397 aa).

It belongs to the LarC family.

The catalysed reaction is Ni(II)-pyridinium-3,5-bisthiocarboxylate mononucleotide = pyridinium-3,5-bisthiocarboxylate mononucleotide + Ni(2+). In terms of biological role, involved in the biosynthesis of a nickel-pincer cofactor ((SCS)Ni(II) pincer complex). Binds Ni(2+), and functions in nickel delivery to pyridinium-3,5-bisthiocarboxylic acid mononucleotide (P2TMN), to form the mature cofactor. Is thus probably required for the activation of nickel-pincer cofactor-dependent enzymes. The chain is Pyridinium-3,5-bisthiocarboxylic acid mononucleotide nickel insertion protein from Thermotoga petrophila (strain ATCC BAA-488 / DSM 13995 / JCM 10881 / RKU-1).